Reading from the N-terminus, the 470-residue chain is ATP synthase subunit beta (470 aa).

An ATP-binding site is contributed by 148–155 (GGAGVGKT).

This sequence belongs to the ATPase alpha/beta chains family. In terms of assembly, F-type ATPases have 2 components, CF(1) - the catalytic core - and CF(0) - the membrane proton channel. CF(1) has five subunits: alpha(3), beta(3), gamma(1), delta(1), epsilon(1). CF(0) has three main subunits: a(1), b(2) and c(9-12). The alpha and beta chains form an alternating ring which encloses part of the gamma chain. CF(1) is attached to CF(0) by a central stalk formed by the gamma and epsilon chains, while a peripheral stalk is formed by the delta and b chains.

Its subcellular location is the cell inner membrane. It carries out the reaction ATP + H2O + 4 H(+)(in) = ADP + phosphate + 5 H(+)(out). Its function is as follows. Produces ATP from ADP in the presence of a proton gradient across the membrane. The catalytic sites are hosted primarily by the beta subunits. This is ATP synthase subunit beta from Saccharophagus degradans (strain 2-40 / ATCC 43961 / DSM 17024).